Reading from the N-terminus, the 209-residue chain is MLITEIFHSIQGEGPYAGLPMLFVRTNVCNIRCEWCDTKYSFYGGKEIPLSELLGIVKEAKEGWVCFTGGEPLVQRDALAFVKSVVDMGKNVLIETNGTISIRNFVFSDRIFIDMDVKPPSAKVTKGFLMDNLRYLRKQDYLKIVIKDDTDLDFAIDFVDRYGEGLSFVFQPAWGSDIRRIADRIVGTGYNVRVLPQIHKIIYGDVPGV.

Substrate is bound by residues 10-12 and arginine 25; that span reads IQG. Residues 16 to 205 form the Radical SAM core domain; that stretch reads YAGLPMLFVR…PQIHKIIYGD (190 aa). [4Fe-4S] cluster contacts are provided by cysteine 29, cysteine 33, and cysteine 36. Residue threonine 38 participates in Mg(2+) binding. Threonine 68 is a substrate binding site. Position 70 (glycine 70) interacts with S-adenosyl-L-methionine.

Belongs to the radical SAM superfamily. 7-carboxy-7-deazaguanine synthase family. As to quaternary structure, homodimer. The cofactor is [4Fe-4S] cluster. Requires S-adenosyl-L-methionine as cofactor. Mg(2+) is required as a cofactor.

It catalyses the reaction 6-carboxy-5,6,7,8-tetrahydropterin + H(+) = 7-carboxy-7-deazaguanine + NH4(+). The protein operates within purine metabolism; 7-cyano-7-deazaguanine biosynthesis. Functionally, catalyzes the complex heterocyclic radical-mediated conversion of 6-carboxy-5,6,7,8-tetrahydropterin (CPH4) to 7-carboxy-7-deazaguanine (CDG), a step common to the biosynthetic pathways of all 7-deazapurine-containing compounds. This is 7-carboxy-7-deazaguanine synthase from Thermoplasma acidophilum (strain ATCC 25905 / DSM 1728 / JCM 9062 / NBRC 15155 / AMRC-C165).